The sequence spans 152 residues: Phosphoribosyl-AMP cyclohydrolase (152 aa).

Residue Asp-92 participates in Mg(2+) binding. Cys-93 is a binding site for Zn(2+). Residues Asp-94 and Asp-96 each contribute to the Mg(2+) site. Zn(2+)-binding residues include Cys-111 and Cys-118.

Belongs to the PRA-CH family. As to quaternary structure, homodimer. Mg(2+) is required as a cofactor. Zn(2+) serves as cofactor.

Its subcellular location is the cytoplasm. It catalyses the reaction 1-(5-phospho-beta-D-ribosyl)-5'-AMP + H2O = 1-(5-phospho-beta-D-ribosyl)-5-[(5-phospho-beta-D-ribosylamino)methylideneamino]imidazole-4-carboxamide. The protein operates within amino-acid biosynthesis; L-histidine biosynthesis; L-histidine from 5-phospho-alpha-D-ribose 1-diphosphate: step 3/9. Functionally, catalyzes the hydrolysis of the adenine ring of phosphoribosyl-AMP. In Sinorhizobium fredii (strain NBRC 101917 / NGR234), this protein is Phosphoribosyl-AMP cyclohydrolase.